The primary structure comprises 95 residues: Small ribosomal subunit protein uS19 (95 aa).

The protein belongs to the universal ribosomal protein uS19 family.

Protein S19 forms a complex with S13 that binds strongly to the 16S ribosomal RNA. This is Small ribosomal subunit protein uS19 from Thermodesulfovibrio yellowstonii (strain ATCC 51303 / DSM 11347 / YP87).